A 176-amino-acid chain; its full sequence is Large ribosomal subunit protein uL16 (176 aa).

It belongs to the universal ribosomal protein uL16 family.

The chain is Large ribosomal subunit protein uL16 from Halorubrum lacusprofundi (strain ATCC 49239 / DSM 5036 / JCM 8891 / ACAM 34).